Consider the following 93-residue polypeptide: UPF0521 protein B (93 aa).

Residues 2–58 (SLKEVITSLKNDFHSINKEIDSMKENNEKQEEKIFQEIKKLKLEMELLRKDNLSFKT) adopt a coiled-coil conformation.

It belongs to the UPF0521 family.

This is UPF0521 protein B from Dictyostelium discoideum (Social amoeba).